Consider the following 149-residue polypeptide: 3-dehydroquinate dehydratase (149 aa).

Y26 serves as the catalytic Proton acceptor. Substrate-binding residues include N77, H83, and D90. H103 serves as the catalytic Proton donor. Substrate contacts are provided by residues 104–105 (LS) and R114.

Belongs to the type-II 3-dehydroquinase family. Homododecamer.

The enzyme catalyses 3-dehydroquinate = 3-dehydroshikimate + H2O. The protein operates within metabolic intermediate biosynthesis; chorismate biosynthesis; chorismate from D-erythrose 4-phosphate and phosphoenolpyruvate: step 3/7. In terms of biological role, catalyzes a trans-dehydration via an enolate intermediate. The sequence is that of 3-dehydroquinate dehydratase from Psychromonas ingrahamii (strain DSM 17664 / CCUG 51855 / 37).